A 483-amino-acid chain; its full sequence is ATP-dependent RNA helicase DDX25 (483 aa).

The Q motif motif lies at 97 to 125; that stretch reads KSFEELHLKNELLRGIYAMGFNRPSKIQE. The 171-residue stretch at 130-300 folds into the Helicase ATP-binding domain; the sequence is MMLADPPQNL…ERIVPDPNII (171 aa). ATP is bound at residue 143 to 150; that stretch reads SQSGTGKT. The short motif at 247–250 is the DEAD box element; the sequence is DEAD. Residues 311 to 478 form the Helicase C-terminal domain; it reads NIQQFYDQCE…KLNSMDMDEM (168 aa).

The protein belongs to the DEAD box helicase family. In terms of tissue distribution, an mRNA component of germ plasm. Localizes to the granulo-fibrillar material (GFM) of the mitochondrial cloud in stage I oocytes. Associated, at a low level, with the periphery of mature germinal granules in later stage oocytes. Localizes to the vegetal cortex in stage II oocytes and segregates with germ plasm during early embryogenesis. In adults, expression is restricted to the ovary and, at a lower level, to spermatogonia, spermatocytes and spermatids of the testis.

It localises to the cytoplasm. The protein localises to the nucleus. The enzyme catalyses ATP + H2O = ADP + phosphate + H(+). ATP-dependent RNA helicase. The chain is ATP-dependent RNA helicase DDX25 from Xenopus laevis (African clawed frog).